A 305-amino-acid polypeptide reads, in one-letter code: D-alanine--D-alanine ligase (305 aa).

Residues 104 to 300 (RALFASAGIP…FPELVRWMVE (197 aa)) enclose the ATP-grasp domain. 131-181 (LPRPFVVKPLNEGSSVGVFIVRDNQPSPLPDWPFDADEVLVESFIPGRELT) contacts ATP. Mg(2+)-binding residues include Asp249, Glu267, and Asn269.

This sequence belongs to the D-alanine--D-alanine ligase family. It depends on Mg(2+) as a cofactor. The cofactor is Mn(2+).

It is found in the cytoplasm. The enzyme catalyses 2 D-alanine + ATP = D-alanyl-D-alanine + ADP + phosphate + H(+). It functions in the pathway cell wall biogenesis; peptidoglycan biosynthesis. Cell wall formation. This is D-alanine--D-alanine ligase from Paramagnetospirillum magneticum (strain ATCC 700264 / AMB-1) (Magnetospirillum magneticum).